The primary structure comprises 131 residues: Profilin (131 aa).

The protein belongs to the profilin family. In terms of assembly, occurs in many kinds of cells as a complex with monomeric actin in a 1:1 ratio.

It localises to the cytoplasm. The protein localises to the cytoskeleton. Binds to actin and affects the structure of the cytoskeleton. At high concentrations, profilin prevents the polymerization of actin, whereas it enhances it at low concentrations. By binding to PIP2, it inhibits the formation of IP3 and DG. This Pyrus communis (Pear) protein is Profilin.